We begin with the raw amino-acid sequence, 62 residues long: Large ribosomal subunit protein bL28 (62 aa).

This sequence belongs to the bacterial ribosomal protein bL28 family.

The polypeptide is Large ribosomal subunit protein bL28 (Staphylococcus epidermidis (strain ATCC 12228 / FDA PCI 1200)).